Reading from the N-terminus, the 266-residue chain is MINILNAIILGIVQGITEFLPISSSGHLLLFRHFMHLKLPIIFDIYLHLATVLVIIIYYRQRILELFLTFIRFSLRKTNKSDLTNLKLILLILIITIVTGVVGTFISKYERMFILPFILINFIITGILILMLEFNFFKIDFKGNILLVGIFIGLMQGLGAFPGISRSGITIFSAVSLGFNRKSAFEISFLSLIPIVFGAILFKYKEFYDIFMVLNFFEINLGALVAFVVGIISINFFFKMLNNKKLYYFSIYLFALSITFCCFFRI.

The next 8 helical transmembrane spans lie at 2-22, 39-59, 86-106, 112-132, 145-165, 184-204, 212-232, and 246-266; these read INIL…FLPI, LPII…IIYY, LKLI…GTFI, MFIL…ILML, ILLV…PGIS, AFEI…LFKY, MVLN…VGII, and LYYF…FFRI.

Belongs to the UppP family.

Its subcellular location is the cell inner membrane. It catalyses the reaction di-trans,octa-cis-undecaprenyl diphosphate + H2O = di-trans,octa-cis-undecaprenyl phosphate + phosphate + H(+). In terms of biological role, catalyzes the dephosphorylation of undecaprenyl diphosphate (UPP). Confers resistance to bacitracin. The polypeptide is Undecaprenyl-diphosphatase (Borrelia garinii subsp. bavariensis (strain ATCC BAA-2496 / DSM 23469 / PBi) (Borreliella bavariensis)).